We begin with the raw amino-acid sequence, 339 residues long: Undecaprenyl-phosphate 4-deoxy-4-formamido-L-arabinose transferase (339 aa).

A run of 2 helical transmembrane segments spans residues 235 to 255 (LSLV…FLLV) and 269 to 289 (LFVL…GMGL).

It belongs to the glycosyltransferase 2 family.

The protein resides in the cell inner membrane. The catalysed reaction is UDP-4-deoxy-4-formamido-beta-L-arabinose + di-trans,octa-cis-undecaprenyl phosphate = 4-deoxy-4-formamido-alpha-L-arabinopyranosyl di-trans,octa-cis-undecaprenyl phosphate + UDP. Its pathway is glycolipid biosynthesis; 4-amino-4-deoxy-alpha-L-arabinose undecaprenyl phosphate biosynthesis; 4-amino-4-deoxy-alpha-L-arabinose undecaprenyl phosphate from UDP-4-deoxy-4-formamido-beta-L-arabinose and undecaprenyl phosphate: step 1/2. The protein operates within bacterial outer membrane biogenesis; lipopolysaccharide biosynthesis. Functionally, catalyzes the transfer of 4-deoxy-4-formamido-L-arabinose from UDP to undecaprenyl phosphate. The modified arabinose is attached to lipid A and is required for resistance to polymyxin and cationic antimicrobial peptides. The sequence is that of Undecaprenyl-phosphate 4-deoxy-4-formamido-L-arabinose transferase from Pseudomonas paraeruginosa (strain DSM 24068 / PA7) (Pseudomonas aeruginosa (strain PA7)).